A 251-amino-acid polypeptide reads, in one-letter code: Ubiquinone/menaquinone biosynthesis C-methyltransferase UbiE (251 aa).

S-adenosyl-L-methionine contacts are provided by residues Thr-74, Asp-95, and 123-124; that span reads NA.

It belongs to the class I-like SAM-binding methyltransferase superfamily. MenG/UbiE family.

The enzyme catalyses a 2-demethylmenaquinol + S-adenosyl-L-methionine = a menaquinol + S-adenosyl-L-homocysteine + H(+). It catalyses the reaction a 2-methoxy-6-(all-trans-polyprenyl)benzene-1,4-diol + S-adenosyl-L-methionine = a 5-methoxy-2-methyl-3-(all-trans-polyprenyl)benzene-1,4-diol + S-adenosyl-L-homocysteine + H(+). It functions in the pathway quinol/quinone metabolism; menaquinone biosynthesis; menaquinol from 1,4-dihydroxy-2-naphthoate: step 2/2. Its pathway is cofactor biosynthesis; ubiquinone biosynthesis. Its function is as follows. Methyltransferase required for the conversion of demethylmenaquinol (DMKH2) to menaquinol (MKH2) and the conversion of 2-polyprenyl-6-methoxy-1,4-benzoquinol (DDMQH2) to 2-polyprenyl-3-methyl-6-methoxy-1,4-benzoquinol (DMQH2). The polypeptide is Ubiquinone/menaquinone biosynthesis C-methyltransferase UbiE (Shewanella baltica (strain OS155 / ATCC BAA-1091)).